Consider the following 306-residue polypeptide: Leucine-rich repeat-containing protein 75B (306 aa).

Residues 1 to 22 (MGARLGRRARADAPAAPSAGPA) form a disordered region. A compositionally biased stretch (low complexity) spans 12–22 (DAPAAPSAGPA). 2 LRR repeats span residues 173-186 (LVVL…LSDE) and 198-211 (LPRL…GNRL).

Belongs to the LRRC75 family.

Its function is as follows. May suppress myogenic differentiation by modulating MYOG expression and Erk1/2 signaling. The polypeptide is Leucine-rich repeat-containing protein 75B (Mus musculus (Mouse)).